We begin with the raw amino-acid sequence, 219 residues long: Suppressor-of-stellate-like protein (219 aa).

A disordered region spans residues 194–219 (SAESPPIKVESSVSKSPSWLRNVPNF). Polar residues predominate over residues 204–219 (SSVSKSPSWLRNVPNF).

This sequence belongs to the casein kinase 2 subunit beta family.

The chain is Suppressor-of-stellate-like protein (Ssl) from Drosophila melanogaster (Fruit fly).